The primary structure comprises 502 residues: Glycerol kinase (502 aa).

ADP is bound at residue Thr-14. ATP contacts are provided by Thr-14, Thr-15, and Ser-16. Residue Thr-14 coordinates sn-glycerol 3-phosphate. Arg-18 provides a ligand contact to ADP. Sn-glycerol 3-phosphate is bound by residues Arg-84, Glu-85, Tyr-136, and Asp-246. Glycerol is bound by residues Arg-84, Glu-85, Tyr-136, Asp-246, and Gln-247. Residues Thr-268 and Gly-311 each contribute to the ADP site. Thr-268, Gly-311, Gln-315, and Gly-412 together coordinate ATP. Gly-412 and Asn-416 together coordinate ADP.

It belongs to the FGGY kinase family. In terms of assembly, homotetramer and homodimer (in equilibrium). Heterodimer with EIIA-Glc. Binds 1 zinc ion per glycerol kinase EIIA-Glc dimer. The zinc ion is important for dimerization.

It carries out the reaction glycerol + ATP = sn-glycerol 3-phosphate + ADP + H(+). It functions in the pathway polyol metabolism; glycerol degradation via glycerol kinase pathway; sn-glycerol 3-phosphate from glycerol: step 1/1. Its activity is regulated as follows. Activity of this regulatory enzyme is affected by several metabolites. Allosterically and non-competitively inhibited by fructose 1,6-bisphosphate (FBP) and unphosphorylated phosphocarrier protein EIIA-Glc (III-Glc), an integral component of the bacterial phosphotransferase (PTS) system. Functionally, key enzyme in the regulation of glycerol uptake and metabolism. Catalyzes the phosphorylation of glycerol to yield sn-glycerol 3-phosphate. In Shigella dysenteriae serotype 1 (strain Sd197), this protein is Glycerol kinase.